Here is a 192-residue protein sequence, read N- to C-terminus: Phosphoheptose isomerase (192 aa).

The region spanning 37–192 (LADSFKAGGK…IQLIEKEMVK (156 aa)) is the SIS domain. 52–54 (NGG) contributes to the substrate binding site. Zn(2+) contacts are provided by H61 and E65. Residues E65, 93 to 94 (ND), 119 to 121 (STS), S124, and Q172 contribute to the substrate site. Zn(2+)-binding residues include Q172 and H180.

Belongs to the SIS family. GmhA subfamily. In terms of assembly, homotetramer. It depends on Zn(2+) as a cofactor.

It is found in the cytoplasm. The enzyme catalyses 2 D-sedoheptulose 7-phosphate = D-glycero-alpha-D-manno-heptose 7-phosphate + D-glycero-beta-D-manno-heptose 7-phosphate. It functions in the pathway carbohydrate biosynthesis; D-glycero-D-manno-heptose 7-phosphate biosynthesis; D-glycero-alpha-D-manno-heptose 7-phosphate and D-glycero-beta-D-manno-heptose 7-phosphate from sedoheptulose 7-phosphate: step 1/1. In terms of biological role, catalyzes the isomerization of sedoheptulose 7-phosphate in D-glycero-D-manno-heptose 7-phosphate. This Enterobacter sp. (strain 638) protein is Phosphoheptose isomerase.